The chain runs to 568 residues: Small ribosomal subunit protein bS1 (568 aa).

6 consecutive S1 motif domains span residues K39 to E100, G118 to R184, G205 to K273, G290 to K360, G377 to K447, and G464 to K533.

Belongs to the bacterial ribosomal protein bS1 family.

Functionally, binds mRNA; thus facilitating recognition of the initiation point. It is needed to translate mRNA with a short Shine-Dalgarno (SD) purine-rich sequence. This is Small ribosomal subunit protein bS1 (rpsA) from Rickettsia typhi (strain ATCC VR-144 / Wilmington).